We begin with the raw amino-acid sequence, 141 residues long: Large ribosomal subunit protein uL11 (141 aa).

It belongs to the universal ribosomal protein uL11 family. As to quaternary structure, part of the ribosomal stalk of the 50S ribosomal subunit. Interacts with L10 and the large rRNA to form the base of the stalk. L10 forms an elongated spine to which L12 dimers bind in a sequential fashion forming a multimeric L10(L12)X complex. One or more lysine residues are methylated.

Functionally, forms part of the ribosomal stalk which helps the ribosome interact with GTP-bound translation factors. This chain is Large ribosomal subunit protein uL11, found in Clostridium kluyveri (strain ATCC 8527 / DSM 555 / NBRC 12016 / NCIMB 10680 / K1).